A 427-amino-acid chain; its full sequence is Trigger factor (427 aa).

Residues G163 to P248 form the PPIase FKBP-type domain.

The protein belongs to the FKBP-type PPIase family. Tig subfamily.

The protein localises to the cytoplasm. The catalysed reaction is [protein]-peptidylproline (omega=180) = [protein]-peptidylproline (omega=0). Involved in protein export. Acts as a chaperone by maintaining the newly synthesized protein in an open conformation. Functions as a peptidyl-prolyl cis-trans isomerase. In Streptococcus thermophilus (strain CNRZ 1066), this protein is Trigger factor.